The primary structure comprises 306 residues: tRNA pseudouridine synthase B (306 aa).

The active-site Nucleophile is the Asp-43.

The protein belongs to the pseudouridine synthase TruB family. Type 1 subfamily.

The catalysed reaction is uridine(55) in tRNA = pseudouridine(55) in tRNA. In terms of biological role, responsible for synthesis of pseudouridine from uracil-55 in the psi GC loop of transfer RNAs. In Heliobacterium modesticaldum (strain ATCC 51547 / Ice1), this protein is tRNA pseudouridine synthase B.